A 266-amino-acid polypeptide reads, in one-letter code: Apolipoprotein A-I (266 aa).

Residues 1-18 (MKAVVLTLAVLFLTGSQA) form the signal peptide. 2 tandem repeats follow at residues 67–88 (LKLLDNWDSLSSTVAKLREQIG) and 89–110 (PVTQEFWDNLEKETEVLRQEMN). Residues 67–266 (LKLLDNWDSL…DEATKKLNSQ (200 aa)) form a 10 X approximate tandem repeats region. Methionine 109 is modified (methionine sulfoxide). The stretch at 111–121 (KDLEEVKKKVQ) is one 3; half-length repeat. 5 repeat units span residues 122–143 (PYLDEFQSKWHEEVELYRQKVA), 144–165 (PLGAELREGARQKLQELQEKLS), 166–187 (PLGEELRDRARTHVDALRAQLA), 188–209 (PYSEQLRERLAARLQALKEGGG), and 210–231 (AALTEYHAKASEHLSALREKAK). The stretch at 232-242 (PALEDLRQGLL) is one 9; half-length repeat. Residues 243–266 (PVLENFRDSLLAAVDEATKKLNSQ) form repeat 10.

Belongs to the apolipoprotein A1/A4/E family. Homodimer. Interacts with APOA1BP and CLU. Component of a sperm activating protein complex (SPAP), consisting of APOA1, an immunoglobulin heavy chain, an immunoglobulin light chain and albumin. Interacts with NDRG1. Interacts with SCGB3A2. Interacts with NAXE and YJEFN3. Post-translationally, glycosylated. Palmitoylated. In terms of processing, phosphorylation sites are present in the extracellular medium.

The protein resides in the secreted. Functionally, participates in the reverse transport of cholesterol from tissues to the liver for excretion by promoting cholesterol efflux from tissues and by acting as a cofactor for the lecithin cholesterol acyltransferase (LCAT). As part of the SPAP complex, activates spermatozoa motility. This Neomonachus schauinslandi (Hawaiian monk seal) protein is Apolipoprotein A-I (APOA1).